The sequence spans 358 residues: Probable dual-specificity RNA methyltransferase RlmN 2 (358 aa).

The active-site Proton acceptor is Glu90. A Radical SAM core domain is found at 96–328 (SGIRRTVCVS…VNTCRYTKGD (233 aa)). Cys103 and Cys334 are disulfide-bonded. Positions 110, 114, and 117 each coordinate [4Fe-4S] cluster. Residues 160-161 (GE), Ser192, 215-217 (SLH), and Asn291 contribute to the S-adenosyl-L-methionine site. Cys334 serves as the catalytic S-methylcysteine intermediate.

This sequence belongs to the radical SAM superfamily. RlmN family. Requires [4Fe-4S] cluster as cofactor.

The protein localises to the cytoplasm. It carries out the reaction adenosine(2503) in 23S rRNA + 2 reduced [2Fe-2S]-[ferredoxin] + 2 S-adenosyl-L-methionine = 2-methyladenosine(2503) in 23S rRNA + 5'-deoxyadenosine + L-methionine + 2 oxidized [2Fe-2S]-[ferredoxin] + S-adenosyl-L-homocysteine. It catalyses the reaction adenosine(37) in tRNA + 2 reduced [2Fe-2S]-[ferredoxin] + 2 S-adenosyl-L-methionine = 2-methyladenosine(37) in tRNA + 5'-deoxyadenosine + L-methionine + 2 oxidized [2Fe-2S]-[ferredoxin] + S-adenosyl-L-homocysteine. Functionally, specifically methylates position 2 of adenine 2503 in 23S rRNA and position 2 of adenine 37 in tRNAs. This Protochlamydia amoebophila (strain UWE25) protein is Probable dual-specificity RNA methyltransferase RlmN 2.